Reading from the N-terminus, the 356-residue chain is MALQNMDISLSTEQLLQAQAHVWNHMYAFANSMSLKCAIQLGIPDILHKHDHPMTLSQLLKAIPINKEKSQSFQRLMRALVNSNFFIEENSNNQEVCYWLTPASRLLLKGAPLTVAPLVQVVLDPTFTNPWHYMSEWFKHENHATQFEAANGCTFWEKLANKPSMGRFFDEAMSCDSRLVAHVLTKDYKHVIDGIRTLVDVGGGNGTMAKAIVEAVPTMKCTVLDLPHVVAGLESTDKLSYIGGDMFQSIPSADAILLKFIIHDWDDEEGLKILKRCKDAVGIGGKVIIIDVVVGVNHDVDEVLEDQLHFDMAMMSYFNAKERTMNEWEKLISAAGFTSYKLTPAFGVRSLIEAYP.

Residues Gly-202, Asp-225, Asp-245, Met-246, and Lys-259 each coordinate S-adenosyl-L-methionine. His-263 acts as the Proton acceptor in catalysis.

This sequence belongs to the class I-like SAM-binding methyltransferase superfamily. Cation-independent O-methyltransferase family. COMT subfamily. As to quaternary structure, homodimer. Specifically expressed in the peltate glandular trichomes on the surface of the young basil leaves.

It catalyses the reaction (E)-isoeugenol + S-adenosyl-L-methionine = (E)-isomethyleugenol + S-adenosyl-L-homocysteine + H(+). Its pathway is aromatic compound metabolism; phenylpropanoid biosynthesis. Phenylpropene O-methyltransferase that catalyzes the methylation of the para-4-hydroxyl of chavicol to methylchavicol. Can also convert eugenol to methyleugenol but with less affinity. The protein is Chavicol O-methyltransferase (CVOMT1) of Ocimum basilicum (Sweet basil).